Consider the following 136-residue polypeptide: Small integral membrane protein 23 (136 aa).

The Cytoplasmic segment spans residues 1-31; the sequence is MTIQKTGCRGREAAEVVEQRRRSHHCDDRKQ. A helical; Signal-anchor for type II membrane protein membrane pass occupies residues 32–52; it reads TLLALLILVLYLGMGISGSSW. Residues 53-136 lie on the Extracellular side of the membrane; that stretch reads EVSGQTKDCN…DLRPEDPCFT (84 aa). The stretch at 92 to 124 forms a coiled coil; it reads LKINLHGFLEKLEKEVRELEQLVRDLEFWLDAL.

The protein resides in the membrane. The sequence is that of Small integral membrane protein 23 (Smim23) from Mus musculus (Mouse).